A 204-amino-acid polypeptide reads, in one-letter code: Small ribosomal subunit protein uS4 (204 aa).

One can recognise an S4 RNA-binding domain in the interval 93 to 156 (SRLSSVLYHS…AKIPVIVEAV (64 aa)).

This sequence belongs to the universal ribosomal protein uS4 family. As to quaternary structure, part of the 30S ribosomal subunit. Contacts protein S5. The interaction surface between S4 and S5 is involved in control of translational fidelity.

In terms of biological role, one of the primary rRNA binding proteins, it binds directly to 16S rRNA where it nucleates assembly of the body of the 30S subunit. With S5 and S12 plays an important role in translational accuracy. This chain is Small ribosomal subunit protein uS4, found in Wolbachia sp. subsp. Brugia malayi (strain TRS).